The following is a 458-amino-acid chain: ATP synthase subunit beta (458 aa).

Residue 148–155 (GGAGVGKT) participates in ATP binding.

The protein belongs to the ATPase alpha/beta chains family. F-type ATPases have 2 components, CF(1) - the catalytic core - and CF(0) - the membrane proton channel. CF(1) has five subunits: alpha(3), beta(3), gamma(1), delta(1), epsilon(1). CF(0) has three main subunits: a(1), b(2) and c(9-12). The alpha and beta chains form an alternating ring which encloses part of the gamma chain. CF(1) is attached to CF(0) by a central stalk formed by the gamma and epsilon chains, while a peripheral stalk is formed by the delta and b chains.

The protein localises to the cell inner membrane. It catalyses the reaction ATP + H2O + 4 H(+)(in) = ADP + phosphate + 5 H(+)(out). Functionally, produces ATP from ADP in the presence of a proton gradient across the membrane. The catalytic sites are hosted primarily by the beta subunits. In Pseudomonas aeruginosa (strain LESB58), this protein is ATP synthase subunit beta.